A 418-amino-acid chain; its full sequence is UDP-N-acetylglucosamine 1-carboxyvinyltransferase (418 aa).

22–23 serves as a coordination point for phosphoenolpyruvate; it reads KN. Arginine 92 serves as a coordination point for UDP-N-acetyl-alpha-D-glucosamine. Residue cysteine 116 is the Proton donor of the active site. Residue cysteine 116 is modified to 2-(S-cysteinyl)pyruvic acid O-phosphothioketal. Residues aspartate 305 and isoleucine 327 each coordinate UDP-N-acetyl-alpha-D-glucosamine.

The protein belongs to the EPSP synthase family. MurA subfamily.

Its subcellular location is the cytoplasm. The enzyme catalyses phosphoenolpyruvate + UDP-N-acetyl-alpha-D-glucosamine = UDP-N-acetyl-3-O-(1-carboxyvinyl)-alpha-D-glucosamine + phosphate. The protein operates within cell wall biogenesis; peptidoglycan biosynthesis. Functionally, cell wall formation. Adds enolpyruvyl to UDP-N-acetylglucosamine. The polypeptide is UDP-N-acetylglucosamine 1-carboxyvinyltransferase (Gluconobacter oxydans (strain 621H) (Gluconobacter suboxydans)).